Here is an 893-residue protein sequence, read N- to C-terminus: Nitrate reductase [NADPH] (893 aa).

The tract at residues 1–83 (MSVTTQQPAV…KPTPDAHVPR (83 aa)) is disordered. Positions 55–65 (PDFPLPPPANP) are enriched in pro residues. Over residues 71 to 83 (DIDKPTPDAHVPR) the composition is skewed to basic and acidic residues. Residue Cys-170 participates in Mo-molybdopterin binding. A Cytochrome b5 heme-binding domain is found at 536 to 611 (NRIVELDELK…MPAYHIGTLS (76 aa)). Residues His-571 and His-594 each contribute to the heme site. The 112-residue stretch at 641–752 (RTWSKALLSS…KGPIGKFEYL (112 aa)) folds into the FAD-binding FR-type domain. Residues 695–698 (RSYT), 712–716 (LIKIY), 726–728 (KMT), Ser-776, and Thr-779 each bind FAD. NADP(+) is bound at residue 863-872 (LVLVCGPEGL).

This sequence belongs to the nitrate reductase family. As to quaternary structure, homodimer. It depends on FAD as a cofactor. Heme is required as a cofactor. Requires Mo-molybdopterin as cofactor.

It carries out the reaction nitrite + NADP(+) + H2O = nitrate + NADPH + H(+). Functionally, nitrate reductase is a key enzyme involved in the first step of nitrate assimilation in plants, fungi and bacteria. This Leptosphaeria maculans (Blackleg fungus) protein is Nitrate reductase [NADPH] (NIAD).